Consider the following 316-residue polypeptide: Acetyl-coenzyme A carboxylase carboxyl transferase subunit alpha (316 aa).

The region spanning 39–293 is the CoA carboxyltransferase C-terminal domain; the sequence is RLQDKSHALT…RQTLLAQLES (255 aa).

Belongs to the AccA family. As to quaternary structure, acetyl-CoA carboxylase is a heterohexamer composed of biotin carboxyl carrier protein (AccB), biotin carboxylase (AccC) and two subunits each of ACCase subunit alpha (AccA) and ACCase subunit beta (AccD).

The protein resides in the cytoplasm. It catalyses the reaction N(6)-carboxybiotinyl-L-lysyl-[protein] + acetyl-CoA = N(6)-biotinyl-L-lysyl-[protein] + malonyl-CoA. The protein operates within lipid metabolism; malonyl-CoA biosynthesis; malonyl-CoA from acetyl-CoA: step 1/1. Its function is as follows. Component of the acetyl coenzyme A carboxylase (ACC) complex. First, biotin carboxylase catalyzes the carboxylation of biotin on its carrier protein (BCCP) and then the CO(2) group is transferred by the carboxyltransferase to acetyl-CoA to form malonyl-CoA. This chain is Acetyl-coenzyme A carboxylase carboxyl transferase subunit alpha, found in Azotobacter vinelandii (strain DJ / ATCC BAA-1303).